Consider the following 172-residue polypeptide: 3-hydroxydecanoyl-[acyl-carrier-protein] dehydratase (172 aa).

H71 is an active-site residue.

Belongs to the thioester dehydratase family. FabA subfamily. Homodimer.

The protein resides in the cytoplasm. It carries out the reaction a (3R)-hydroxyacyl-[ACP] = a (2E)-enoyl-[ACP] + H2O. The catalysed reaction is (3R)-hydroxydecanoyl-[ACP] = (2E)-decenoyl-[ACP] + H2O. The enzyme catalyses (2E)-decenoyl-[ACP] = (3Z)-decenoyl-[ACP]. It participates in lipid metabolism; fatty acid biosynthesis. Necessary for the introduction of cis unsaturation into fatty acids. Catalyzes the dehydration of (3R)-3-hydroxydecanoyl-ACP to E-(2)-decenoyl-ACP and then its isomerization to Z-(3)-decenoyl-ACP. Can catalyze the dehydratase reaction for beta-hydroxyacyl-ACPs with saturated chain lengths up to 16:0, being most active on intermediate chain length. The polypeptide is 3-hydroxydecanoyl-[acyl-carrier-protein] dehydratase (Sodalis glossinidius (strain morsitans)).